The following is a 272-amino-acid chain: Zinc transporter ZupT (272 aa).

8 consecutive transmembrane segments (helical) span residues 12-32, 40-60, 76-96, 126-146, 158-178, 187-207, 211-231, and 247-267; these read ALAVTLAAGLATGLGSLMVVF, LLAFGLAFAGGAMVFVSLSEI, LGFTYGTLTFLGGMLLIMVID, LLTAVAITAHNFPEGLATFFA, AFAIAIHNIPEGIAIAVPVYF, FGASLLSGLAEPIGAGIGYLL, VLSEAVFGAVFGVIAGVMVFL, and HETVYGLVSGMGTLAISLVLF. Positions 136 and 139 each coordinate Fe(2+). Zn(2+)-binding residues include Glu-139 and His-164. 3 residues coordinate Fe(2+): Asn-165, Glu-168, and Glu-197. Residue Glu-168 participates in Zn(2+) binding.

The protein belongs to the ZIP transporter (TC 2.A.5) family. ZupT subfamily.

It localises to the cell inner membrane. It carries out the reaction Zn(2+)(in) = Zn(2+)(out). Mediates zinc uptake. May also transport other divalent cations. The polypeptide is Zinc transporter ZupT (Xanthomonas campestris pv. campestris (strain ATCC 33913 / DSM 3586 / NCPPB 528 / LMG 568 / P 25)).